A 448-amino-acid polypeptide reads, in one-letter code: uncharacterized protein (448 aa).

In terms of tissue distribution, component of the acid-insoluble and acid-soluble organic matrix of the aragonitic skeleton (at protein level).

Its subcellular location is the secreted. This is an uncharacterized protein from Acropora millepora (Staghorn coral).